The primary structure comprises 74 residues: Heat shock factor-binding protein 1-like protein 1 (74 aa).

Residues 12 to 65 are a coiled coil; it reads RALRDAAENLFQELQEHFQALTATLNLRMEEMGNRIEDLQKNVKDLMVQAGIEN.

The protein belongs to the HSBP1 family.

The protein is Heat shock factor-binding protein 1-like protein 1 (HSBP1L1) of Homo sapiens (Human).